We begin with the raw amino-acid sequence, 339 residues long: MNKASKYRENNLITYSKNIFIPLTEICKNDCGYCNFKKTPDDPSAIILKTKEEVLASLKEAERYGCSEALFTFGEDADEEESVQQKLAEFGYENIVDYVFDICKMTLEETSLLPHTNGGNFSYESLKKLKEVNASMGMMLESTSVRLMNTVAHNKSPGKNPEIRLKTISNAGKLKIPYTTGILIGIGETKEEIADSLLAIRDLYDKYGHIQEVIIQNFTTSPGIEMENWEEPTFLDMVRTVIAGKLLFRDTDVSIQVPPNLNHDTAQIFLLCGADDWGGVSPVSPDYVNPTSPWPTLDELNRLTQDAGFELIERMCVYEKYVNDKWLNETLLEKIANLS.

The 246-residue stretch at 13-258 (ITYSKNIFIP…RDTDVSIQVP (246 aa)) folds into the Radical SAM core domain. Cys-27, Cys-31, and Cys-34 together coordinate [4Fe-4S] cluster.

It belongs to the radical SAM superfamily. CofG family. Consists of two subunits, CofG and CofH. [4Fe-4S] cluster serves as cofactor.

It carries out the reaction 5-amino-5-(4-hydroxybenzyl)-6-(D-ribitylimino)-5,6-dihydrouracil + S-adenosyl-L-methionine = 7,8-didemethyl-8-hydroxy-5-deazariboflavin + 5'-deoxyadenosine + L-methionine + NH4(+) + H(+). It functions in the pathway cofactor biosynthesis; coenzyme F0 biosynthesis. Catalyzes the radical-mediated synthesis of 7,8-didemethyl-8-hydroxy-5-deazariboflavin from 5-amino-5-(4-hydroxybenzyl)-6-(D-ribitylimino)-5,6-dihydrouracil. This is 7,8-didemethyl-8-hydroxy-5-deazariboflavin synthase from Methanobrevibacter smithii (strain ATCC 35061 / DSM 861 / OCM 144 / PS).